We begin with the raw amino-acid sequence, 384 residues long: Prokineticin receptor 2 (384 aa).

The Extracellular portion of the chain corresponds to 1–54; it reads MAAQNGNTSFTPNFNPPQDHASSLSFNFSYGDYDLPMDEDEDMTKTRTFFAAKI. N-linked (GlcNAc...) asparagine glycosylation is found at asparagine 7 and asparagine 27. A helical transmembrane segment spans residues 55–75; that stretch reads VIGIALAGIMLVCGIGNFVFI. Over 76–89 the chain is Cytoplasmic; that stretch reads AALTRYKKLRNLTN. A helical transmembrane segment spans residues 90 to 110; it reads LLIANLAISDFLVAIICCPFE. Residues 111 to 136 lie on the Extracellular side of the membrane; it reads MDYYVVRQLSWEHGHVLCASVNYLRT. A disulfide bridge links cysteine 128 with cysteine 208. The helical transmembrane segment at 137 to 157 threads the bilayer; that stretch reads VSLYVSTNALLAIAIDRYLAI. Residues 158–171 are Cytoplasmic-facing; the sequence is VHPLKPRMNYQTAS. The helical transmembrane segment at 172–192 threads the bilayer; it reads FLIALVWMVSILIAIPSAYFA. Residues 193 to 223 are Extracellular-facing; sequence TETVLFIVKSQEKIFCGQIWPVDQQLYYKSY. A helical transmembrane segment spans residues 224–244; it reads FLFIFGVEFVGPVVTMTLCYA. Over 245-273 the chain is Cytoplasmic; sequence RISRELWFKAVPGFQTEQIRKRLRCRRKT. The helical transmembrane segment at 274–294 threads the bilayer; that stretch reads VLVLMCILTAYVLCWAPFYGF. The Extracellular portion of the chain corresponds to 295–313; the sequence is TIVRDFFPTVFVKEKHYLT. The chain crosses the membrane as a helical span at residues 314–334; it reads AFYVVECIAMSNSMINTVCFV. Over 335–384 the chain is Cytoplasmic; that stretch reads TVKNNTMKYFKKMMLLHWRPSQRGSKSSADLDLRTNGVPTTEEVDCIRLK.

This sequence belongs to the G-protein coupled receptor 1 family. Homodimer. As to expression, expressed in the ileocecum, thyroid gland, pituitary gland, salivary gland, adrenal gland, testis, ovary and brain.

It is found in the cell membrane. Receptor for prokineticin 2. Exclusively coupled to the G(q) subclass of heteromeric G proteins. Activation leads to mobilization of calcium, stimulation of phosphoinositide turnover and activation of p44/p42 mitogen-activated protein kinase. This Homo sapiens (Human) protein is Prokineticin receptor 2 (PROKR2).